The primary structure comprises 236 residues: Biosynthetic peptidoglycan transglycosylase (236 aa).

Residues Ala12–Pro31 form a helical membrane-spanning segment.

This sequence belongs to the glycosyltransferase 51 family.

It localises to the cell inner membrane. It catalyses the reaction [GlcNAc-(1-&gt;4)-Mur2Ac(oyl-L-Ala-gamma-D-Glu-L-Lys-D-Ala-D-Ala)](n)-di-trans,octa-cis-undecaprenyl diphosphate + beta-D-GlcNAc-(1-&gt;4)-Mur2Ac(oyl-L-Ala-gamma-D-Glu-L-Lys-D-Ala-D-Ala)-di-trans,octa-cis-undecaprenyl diphosphate = [GlcNAc-(1-&gt;4)-Mur2Ac(oyl-L-Ala-gamma-D-Glu-L-Lys-D-Ala-D-Ala)](n+1)-di-trans,octa-cis-undecaprenyl diphosphate + di-trans,octa-cis-undecaprenyl diphosphate + H(+). Its pathway is cell wall biogenesis; peptidoglycan biosynthesis. Functionally, peptidoglycan polymerase that catalyzes glycan chain elongation from lipid-linked precursors. This Pseudomonas putida (strain ATCC 47054 / DSM 6125 / CFBP 8728 / NCIMB 11950 / KT2440) protein is Biosynthetic peptidoglycan transglycosylase.